The sequence spans 632 residues: DNA mismatch repair protein MutL (632 aa).

It belongs to the DNA mismatch repair MutL/HexB family.

Its function is as follows. This protein is involved in the repair of mismatches in DNA. It is required for dam-dependent methyl-directed DNA mismatch repair. May act as a 'molecular matchmaker', a protein that promotes the formation of a stable complex between two or more DNA-binding proteins in an ATP-dependent manner without itself being part of a final effector complex. This chain is DNA mismatch repair protein MutL, found in Pseudomonas putida (strain GB-1).